We begin with the raw amino-acid sequence, 723 residues long: Probable inactive serine/threonine-protein kinase fnkD (723 aa).

The Protein kinase domain occupies 33 to 276 (WEIITQLESN…TTSLPKYSTL (244 aa)). FNIP repeat units follow at residues 301–342 (FNQP…ELAS), 343–384 (FNQT…LLSS), 385–426 (FNQP…SLAS), 524–565 (FNQS…ILPS), 566–606 (FNHP…LGDE), and 647–690 (FNIE…FGIT).

It belongs to the protein kinase superfamily. STE Ser/Thr protein kinase family.

This chain is Probable inactive serine/threonine-protein kinase fnkD (fnkD-1), found in Dictyostelium discoideum (Social amoeba).